A 334-amino-acid chain; its full sequence is Biotin synthase (334 aa).

Residues 55–285 (GEGGGVHACS…AHPSKIIKFA (231 aa)) enclose the Radical SAM core domain. C73, C77, and C80 together coordinate [4Fe-4S] cluster. Residues C152, C213, and K283 each coordinate [2Fe-2S] cluster.

Belongs to the radical SAM superfamily. Biotin synthase family. As to quaternary structure, homodimer. Requires [4Fe-4S] cluster as cofactor. It depends on [2Fe-2S] cluster as a cofactor.

The enzyme catalyses (4R,5S)-dethiobiotin + (sulfur carrier)-SH + 2 reduced [2Fe-2S]-[ferredoxin] + 2 S-adenosyl-L-methionine = (sulfur carrier)-H + biotin + 2 5'-deoxyadenosine + 2 L-methionine + 2 oxidized [2Fe-2S]-[ferredoxin]. Its pathway is cofactor biosynthesis; biotin biosynthesis; biotin from 7,8-diaminononanoate: step 2/2. Catalyzes the conversion of dethiobiotin (DTB) to biotin by the insertion of a sulfur atom into dethiobiotin via a radical-based mechanism. The sequence is that of Biotin synthase from Chlorobaculum parvum (strain DSM 263 / NCIMB 8327) (Chlorobium vibrioforme subsp. thiosulfatophilum).